The chain runs to 415 residues: Mitochondrial distribution and morphology protein 12 (415 aa).

An SMP-LTD domain is found at 1–402 (MSFDINWSEL…WPSWVCFDLN (402 aa)). The segment at 53 to 146 (EITIRHIGDP…PPLTDLRRSR (94 aa)) is disordered. Composition is skewed to acidic residues over residues 62 to 75 (PFDDFYEDEGDDDE) and 92 to 103 (NSSDDDEDDEYD).

This sequence belongs to the MDM12 family. In terms of assembly, component of the ER-mitochondria encounter structure (ERMES) or MDM complex, composed of MMM1, MDM10, MDM12 and MDM34. An MMM1 homodimer associates with one molecule of MDM12 on each side in a pairwise head-to-tail manner, and the SMP-LTD domains of MMM1 and MDM12 generate a continuous hydrophobic tunnel for phospholipid trafficking.

Its subcellular location is the mitochondrion outer membrane. It localises to the endoplasmic reticulum membrane. In terms of biological role, component of the ERMES/MDM complex, which serves as a molecular tether to connect the endoplasmic reticulum (ER) and mitochondria. Components of this complex are involved in the control of mitochondrial shape and protein biogenesis, and function in nonvesicular lipid trafficking between the ER and mitochondria. MDM12 is required for the interaction of the ER-resident membrane protein MMM1 and the outer mitochondrial membrane-resident beta-barrel protein MDM10. The MDM12-MMM1 subcomplex functions in the major beta-barrel assembly pathway that is responsible for biogenesis of all mitochondrial outer membrane beta-barrel proteins, and acts in a late step after the SAM complex. The MDM10-MDM12-MMM1 subcomplex further acts in the TOM40-specific pathway after the action of the MDM12-MMM1 complex. Essential for establishing and maintaining the structure of mitochondria and maintenance of mtDNA nucleoids. The chain is Mitochondrial distribution and morphology protein 12 from Debaryomyces hansenii (strain ATCC 36239 / CBS 767 / BCRC 21394 / JCM 1990 / NBRC 0083 / IGC 2968) (Yeast).